A 120-amino-acid polypeptide reads, in one-letter code: Glycine cleavage system H protein (120 aa).

The Lipoyl-binding domain maps to D19 to D101. At K60 the chain carries N6-lipoyllysine.

It belongs to the GcvH family. In terms of assembly, the glycine cleavage system is composed of four proteins: P, T, L and H. (R)-lipoate serves as cofactor.

The glycine cleavage system catalyzes the degradation of glycine. The H protein shuttles the methylamine group of glycine from the P protein to the T protein. This is Glycine cleavage system H protein from Deinococcus geothermalis (strain DSM 11300 / CIP 105573 / AG-3a).